We begin with the raw amino-acid sequence, 455 residues long: Kynurenine 3-monooxygenase (455 aa).

The next 2 membrane-spanning stretches (helical) occupy residues Trp393–Tyr416 and Leu429–Arg453.

Belongs to the aromatic-ring hydroxylase family. KMO subfamily. FAD serves as cofactor.

Its subcellular location is the mitochondrion. It is found in the membrane. It catalyses the reaction L-kynurenine + NADPH + O2 + H(+) = 3-hydroxy-L-kynurenine + NADP(+) + H2O. It functions in the pathway cofactor biosynthesis; NAD(+) biosynthesis; quinolinate from L-kynurenine: step 1/3. Its function is as follows. Catalyzes the hydroxylation of L-kynurenine (L-Kyn) to form 3-hydroxy-L-kynurenine (L-3OHKyn). Required for synthesis of quinolinic acid. The protein is Kynurenine 3-monooxygenase of Drosophila willistoni (Fruit fly).